A 210-amino-acid chain; its full sequence is Protein-L-isoaspartate O-methyltransferase (210 aa).

S54 is an active-site residue.

It belongs to the methyltransferase superfamily. L-isoaspartyl/D-aspartyl protein methyltransferase family.

It is found in the cytoplasm. It carries out the reaction [protein]-L-isoaspartate + S-adenosyl-L-methionine = [protein]-L-isoaspartate alpha-methyl ester + S-adenosyl-L-homocysteine. In terms of biological role, catalyzes the methyl esterification of L-isoaspartyl residues in peptides and proteins that result from spontaneous decomposition of normal L-aspartyl and L-asparaginyl residues. It plays a role in the repair and/or degradation of damaged proteins. This is Protein-L-isoaspartate O-methyltransferase from Methanothrix thermoacetophila (strain DSM 6194 / JCM 14653 / NBRC 101360 / PT) (Methanosaeta thermophila).